The primary structure comprises 412 residues: FAD-dependent monooxygenase nscC (412 aa).

The signal sequence occupies residues 1–21 (MAKPQATVLIIGAGISGLTTS). 2 residues coordinate FAD: Glu35 and Ala46. A glycan (N-linked (GlcNAc...) asparagine) is linked at Asn92. Residue Arg119 coordinates FAD. N-linked (GlcNAc...) asparagine glycosylation is found at Asn170 and Asn231. Asp326 and Gly339 together coordinate FAD.

This sequence belongs to the paxM FAD-dependent monooxygenase family. Requires FAD as cofactor.

It functions in the pathway secondary metabolite biosynthesis. FAD-dependent monooxygenase; part of the gene cluster that mediates the biosynthesis of neosartoricin B, a prenylated anthracenone that probably exhibits T-cell antiproliferative activity, suggestive of a physiological role as an immunosuppressive agent. The non-reducing polyketide synthase nscA probably synthesizes and cyclizes the decaketide backbone. The hydrolase nscB then mediates the product release through hydrolysis followed by spontaneous decarboxylation. The prenyltransferase nscD catalyzes the addition of the dimethylallyl group to the aromatic C5. The FAD-dependent monooxygenase nscC is then responsible for the stereospecific hydroxylation at C2. Neosartoricin B can be converted into two additional compounds neosartoricins C and D. Neosartoricin C is a spirocyclic compound that is cyclized through the attack of C3 hydroxyl on C14, followed by dehydration. On the other hand, neosartoricin D is a further cyclized compound in which attack of C2 on C14 in neosartoricin C results in the formation of the acetal-containing dioxabicyclo-octanone ring. Both of these compounds are novel and possibly represent related metabolites of the gene cluster. The polypeptide is FAD-dependent monooxygenase nscC (Arthroderma otae (strain ATCC MYA-4605 / CBS 113480) (Microsporum canis)).